Consider the following 369-residue polypeptide: Anhydro-N-acetylmuramic acid kinase (369 aa).

11–18 provides a ligand contact to ATP; the sequence is GTSMDAVD.

Belongs to the anhydro-N-acetylmuramic acid kinase family.

The enzyme catalyses 1,6-anhydro-N-acetyl-beta-muramate + ATP + H2O = N-acetyl-D-muramate 6-phosphate + ADP + H(+). Its pathway is amino-sugar metabolism; 1,6-anhydro-N-acetylmuramate degradation. It participates in cell wall biogenesis; peptidoglycan recycling. Catalyzes the specific phosphorylation of 1,6-anhydro-N-acetylmuramic acid (anhMurNAc) with the simultaneous cleavage of the 1,6-anhydro ring, generating MurNAc-6-P. Is required for the utilization of anhMurNAc either imported from the medium or derived from its own cell wall murein, and thus plays a role in cell wall recycling. The sequence is that of Anhydro-N-acetylmuramic acid kinase from Idiomarina loihiensis (strain ATCC BAA-735 / DSM 15497 / L2-TR).